Reading from the N-terminus, the 325-residue chain is MSTNFEKHFQENVDECTLEQLRDILVNKSGKTVLANRFRALFNLKTVAEEFATKPEEAKKAIEYIAESFVNDKSELLKHEVAYVLGQTKNLDAAPTLRHVMLDQNQEPMVRHEAAEALGALGDKDSLDDLNKAAKEDPHVAVRETCELAINRINWTHGGAKDKENLQQSLYSSIDPAPPLPLEKDATIPELQALLNDPKQPLFQRYRAMFRLRDIGTDEAILALATGFSAESSLFKHEIAYVFGQIGSPAAVPSLIEVLGRKEEAPMVRHEAAEALGAIASPEVVDVLKSYLNDEVDVVRESCIVALDMYDYENSNELEYAPTAN.

The residue at position 2 (Ser2) is an N-acetylserine. HEAT-like PBS-type repeat units lie at residues 77 to 103 and 110 to 136; these read LKHE…VMLD and VRHE…AAKE. The Fe cation site is built by His79, Glu80, His112, and Glu113. Ser126 bears the Phosphoserine mark. At Thr187 the chain carries Phosphothreonine. 3 HEAT-like PBS-type repeats span residues 202 to 231, 235 to 261, and 268 to 294; these read LFQR…FSAE, FKHE…VLGR, and VRHE…YLND. Positions 237, 238, 270, and 271 each coordinate Fe cation. Ser281 carries the phosphoserine modification.

Belongs to the deoxyhypusine hydroxylase family. It depends on Fe(2+) as a cofactor.

It is found in the cytoplasm. It localises to the nucleus. The enzyme catalyses [eIF5A protein]-deoxyhypusine + AH2 + O2 = [eIF5A protein]-hypusine + A + H2O. The protein operates within protein modification; eIF5A hypusination. Functionally, catalyzes the hydroxylation of the N(6)-(4-aminobutyl)-L-lysine intermediate to form hypusine, an essential post-translational modification only found in mature eIF-5A factor. This is Deoxyhypusine hydroxylase from Saccharomyces cerevisiae (strain ATCC 204508 / S288c) (Baker's yeast).